Consider the following 121-residue polypeptide: Large ribosomal subunit protein bL12 (121 aa).

The protein belongs to the bacterial ribosomal protein bL12 family. Homodimer. Part of the ribosomal stalk of the 50S ribosomal subunit. Forms a multimeric L10(L12)X complex, where L10 forms an elongated spine to which 2 to 4 L12 dimers bind in a sequential fashion. Binds GTP-bound translation factors.

In terms of biological role, forms part of the ribosomal stalk which helps the ribosome interact with GTP-bound translation factors. Is thus essential for accurate translation. The polypeptide is Large ribosomal subunit protein bL12 (Clostridium novyi (strain NT)).